A 349-amino-acid chain; its full sequence is Core protein VP7 (349 aa).

Residue Asn-287 is glycosylated (N-linked (GlcNAc...) asparagine; by host).

This sequence belongs to the orbivirus VP7 family. As to quaternary structure, homotrimer that assemble in a complex of 260 capsomers on an inner scaffold composed of VP3.

The protein localises to the virion. Its function is as follows. The VP7 protein is one of the five proteins (with VP1, VP3, VP4, and VP6) which form the inner capsid of the virus. The protein is Core protein VP7 (Segment-7) of Antilocapra americana (Pronghorn).